The following is a 206-amino-acid chain: Small ribosomal subunit protein uS4 (206 aa).

An S4 RNA-binding domain is found at 96-158 (SRLDNVVYRM…AKGQLRIKGA (63 aa)).

Belongs to the universal ribosomal protein uS4 family. In terms of assembly, part of the 30S ribosomal subunit. Contacts protein S5. The interaction surface between S4 and S5 is involved in control of translational fidelity.

One of the primary rRNA binding proteins, it binds directly to 16S rRNA where it nucleates assembly of the body of the 30S subunit. In terms of biological role, with S5 and S12 plays an important role in translational accuracy. The polypeptide is Small ribosomal subunit protein uS4 (Coxiella burnetii (strain CbuK_Q154) (Coxiella burnetii (strain Q154))).